The chain runs to 324 residues: Putative divalent cation/proton antiporter TMEM165 (324 aa).

The first 33 residues, 1–33 (MAAAAPGNGRASAPRLLLLFLVPLLWAPAAVRA), serve as a signal peptide directing secretion. The Lumenal portion of the chain corresponds to 34 to 89 (GPDEDLSHRNKEPPAPAQQLQPQPVAVQGPEPARVEKIFTPAAPVHTNKEDPATQT). The span at 35 to 45 (PDEDLSHRNKE) shows a compositional bias: basic and acidic residues. A disordered region spans residues 35 to 59 (PDEDLSHRNKEPPAPAQQLQPQPVA). Positions 50 to 59 (AQQLQPQPVA) are enriched in low complexity. Residues 90–110 (NLGFIHAFVAAISVIIVSELG) form a helical membrane-spanning segment. The Cytoplasmic portion of the chain corresponds to 111–126 (DKTFFIAAIMAMRYNR). The chain crosses the membrane as a helical span at residues 127-147 (LTVLAGAMLALGLMTCLSVLF). The Lumenal portion of the chain corresponds to 148-151 (GYAT). A helical transmembrane segment spans residues 152-172 (TVIPRVYTYYVSTVLFAIFGI). The Cytoplasmic portion of the chain corresponds to 173 to 228 (RMLREGLKMSPDEGQEELEEVQAELKKKDEEFQRTKLLNGPGDVETGTSITVPQKK). A coiled-coil region spans residues 184-211 (DEGQEELEEVQAELKKKDEEFQRTKLLN). Residues 229-249 (WLHFISPIFVQALTLTFLAEW) form a helical membrane-spanning segment. At 250-267 (GDRSQLTTIVLAAREDPY) the chain is on the lumenal side. The chain crosses the membrane as a helical span at residues 268-288 (GVAVGGTVGHCLCTGLAVIGG). Topologically, residues 289 to 299 (RMIAQKISVRT) are cytoplasmic. A helical transmembrane segment spans residues 300–320 (VTIIGGIVFLAFAFSALFISP). Topologically, residues 321 to 324 (DSGF) are lumenal.

This sequence belongs to the GDT1 family. As to expression, ubiquitously expressed.

It localises to the golgi apparatus membrane. It carries out the reaction Ca(2+)(in) + n H(+)(out) = Ca(2+)(out) + n H(+)(in). The enzyme catalyses Mn(2+)(in) + n H(+)(out) = Mn(2+)(out) + n H(+)(in). Putative divalent cation:proton antiporter that exchanges calcium or manganese ions for protons across the Golgi membrane. Mediates the reversible transport of calcium or manganese to the Golgi lumen driven by the proton gradient and possibly the membrane potential generated by V-ATPase. Provides calcium or manganese cofactors to resident Golgi enzymes and contributes to the maintenance of an acidic luminal Golgi pH required for proper functioning of the secretory pathway. Promotes Ca(2+) storage within the Golgi lumen of the mammary epithelial cells to be then secreted into milk. The transport mechanism and stoichiometry remains to be elucidated. The chain is Putative divalent cation/proton antiporter TMEM165 from Homo sapiens (Human).